The primary structure comprises 153 residues: MSIIPSFFTSKRSNIFDPFSLDTWDPFQGIISTEPARETAAIVNARIDWKETPEAHVLKADLPGMKKEEVKVEVEDGRVLQISGERCREQEEKDDTWHRVERSSGKFIRRFRLPENAKMDEVKAMMENGVLTVVVPKEEEEKKPMVKAIDISG.

The sHSP domain occupies 38 to 153; the sequence is ETAAIVNARI…PMVKAIDISG (116 aa).

The protein belongs to the small heat shock protein (HSP20) family. In terms of assembly, forms oligomeric structures.

The protein resides in the cytoplasm. The protein is 17.6 kDa class I heat shock protein (HSP17.6) of Helianthus annuus (Common sunflower).